A 51-amino-acid chain; its full sequence is Lantibiotic streptococcin A-FF22 (51 aa).

Positions 1 to 25 (MEKNNEVINSIQEVSLEELDQIIGA) are excised as a propeptide. Cross-links (beta-methyllanthionine (Thr-Cys)) lie at residues 33–38 (TISHEC) and 42–50 (TWAFLATCC). Positions 35–49 (SHECHLNTWAFLATC) form a cross-link, lanthionine (Ser-Cys). 2,3-didehydrobutyrine is present on T48.

This sequence belongs to the type A lantibiotic family. Post-translationally, maturation of lantibiotics involves the enzymatic conversion of Thr, and Ser into dehydrated AA and the formation of thioether bonds with cysteine. This is followed by membrane translocation and cleavage of the modified precursor.

It localises to the secreted. Its subcellular location is the cell surface. Lanthionine-containing peptide antibiotic (lantibiotic) active on certain Gram-positive bacteria. The bactericidal activity of lantibiotics is based on depolarization of energized bacterial cytoplasmic membranes, initiated by the formation of aqueous transmembrane pores. The polypeptide is Lantibiotic streptococcin A-FF22 (scnA) (Streptococcus pyogenes).